The primary structure comprises 470 residues: UDP-N-acetylmuramate--L-alanine ligase (470 aa).

118–124 (GTHGKTT) contacts ATP.

It belongs to the MurCDEF family.

The protein localises to the cytoplasm. It catalyses the reaction UDP-N-acetyl-alpha-D-muramate + L-alanine + ATP = UDP-N-acetyl-alpha-D-muramoyl-L-alanine + ADP + phosphate + H(+). The protein operates within cell wall biogenesis; peptidoglycan biosynthesis. Functionally, cell wall formation. The sequence is that of UDP-N-acetylmuramate--L-alanine ligase from Cereibacter sphaeroides (strain ATCC 17025 / ATH 2.4.3) (Rhodobacter sphaeroides).